The following is a 572-amino-acid chain: Proline--tRNA ligase (572 aa).

The protein belongs to the class-II aminoacyl-tRNA synthetase family. ProS type 1 subfamily. As to quaternary structure, homodimer.

Its subcellular location is the cytoplasm. It catalyses the reaction tRNA(Pro) + L-proline + ATP = L-prolyl-tRNA(Pro) + AMP + diphosphate. Its function is as follows. Catalyzes the attachment of proline to tRNA(Pro) in a two-step reaction: proline is first activated by ATP to form Pro-AMP and then transferred to the acceptor end of tRNA(Pro). As ProRS can inadvertently accommodate and process non-cognate amino acids such as alanine and cysteine, to avoid such errors it has two additional distinct editing activities against alanine. One activity is designated as 'pretransfer' editing and involves the tRNA(Pro)-independent hydrolysis of activated Ala-AMP. The other activity is designated 'posttransfer' editing and involves deacylation of mischarged Ala-tRNA(Pro). The misacylated Cys-tRNA(Pro) is not edited by ProRS. This Erwinia tasmaniensis (strain DSM 17950 / CFBP 7177 / CIP 109463 / NCPPB 4357 / Et1/99) protein is Proline--tRNA ligase.